The following is a 290-amino-acid chain: uncharacterized protein (290 aa).

Positions 30–274 (PTILLLHGFP…YDTGHFALET (245 aa)) constitute an AB hydrolase-1 domain. His269 is an active-site residue.

It belongs to the DmpD/TodF/XylF esterase family.

This is an uncharacterized protein from Saccharomyces cerevisiae (strain ATCC 204508 / S288c) (Baker's yeast).